The following is a 171-amino-acid chain: Small ribosomal subunit protein uS5 (171 aa).

Positions 15–78 (LKDRLVAINR…EAAKKNLTRV (64 aa)) constitute an S5 DRBM domain.

The protein belongs to the universal ribosomal protein uS5 family. In terms of assembly, part of the 30S ribosomal subunit. Contacts proteins S4 and S8.

Its function is as follows. With S4 and S12 plays an important role in translational accuracy. Located at the back of the 30S subunit body where it stabilizes the conformation of the head with respect to the body. The sequence is that of Small ribosomal subunit protein uS5 from Phocaeicola vulgatus (strain ATCC 8482 / DSM 1447 / JCM 5826 / CCUG 4940 / NBRC 14291 / NCTC 11154) (Bacteroides vulgatus).